We begin with the raw amino-acid sequence, 142 residues long: Cytidine deaminase (142 aa).

One can recognise a CMP/dCMP-type deaminase domain in the interval 9 to 139; the sequence is RQLEALKRAA…ELLPMAFGPS (131 aa). Residue 50–52 participates in substrate binding; the sequence is NVE. Position 61 (cysteine 61) interacts with Zn(2+). Residue glutamate 63 is the Proton donor of the active site. Positions 96 and 99 each coordinate Zn(2+).

The protein belongs to the cytidine and deoxycytidylate deaminase family. Homodimer. Zn(2+) is required as a cofactor.

The enzyme catalyses cytidine + H2O + H(+) = uridine + NH4(+). It carries out the reaction 2'-deoxycytidine + H2O + H(+) = 2'-deoxyuridine + NH4(+). Functionally, this enzyme scavenges exogenous and endogenous cytidine and 2'-deoxycytidine for UMP synthesis. The polypeptide is Cytidine deaminase (CDD1) (Saccharomyces cerevisiae (strain ATCC 204508 / S288c) (Baker's yeast)).